A 210-amino-acid polypeptide reads, in one-letter code: Na(+)-translocating NADH-quinone reductase subunit D (210 aa).

Transmembrane regions (helical) follow at residues 42-62 (FVMT…VSVI), 72-92 (IIVQ…ILKA), 103-123 (VFVG…AFAM), 131-151 (LIDG…VGFF), and 178-198 (NGLM…IWAI).

The protein belongs to the NqrDE/RnfAE family. As to quaternary structure, composed of six subunits; NqrA, NqrB, NqrC, NqrD, NqrE and NqrF.

Its subcellular location is the cell inner membrane. The enzyme catalyses a ubiquinone + n Na(+)(in) + NADH + H(+) = a ubiquinol + n Na(+)(out) + NAD(+). NQR complex catalyzes the reduction of ubiquinone-1 to ubiquinol by two successive reactions, coupled with the transport of Na(+) ions from the cytoplasm to the periplasm. NqrA to NqrE are probably involved in the second step, the conversion of ubisemiquinone to ubiquinol. In Vibrio vulnificus (strain YJ016), this protein is Na(+)-translocating NADH-quinone reductase subunit D.